Reading from the N-terminus, the 184-residue chain is ATP synthase subunit b (184 aa).

The helical transmembrane segment at 24 to 44 (ILVVVVGFALLMFIVIKFIVP) threads the bilayer.

Belongs to the ATPase B chain family. In terms of assembly, F-type ATPases have 2 components, F(1) - the catalytic core - and F(0) - the membrane proton channel. F(1) has five subunits: alpha(3), beta(3), gamma(1), delta(1), epsilon(1). F(0) has three main subunits: a(1), b(2) and c(10-14). The alpha and beta chains form an alternating ring which encloses part of the gamma chain. F(1) is attached to F(0) by a central stalk formed by the gamma and epsilon chains, while a peripheral stalk is formed by the delta and b chains.

The protein resides in the cell membrane. Its function is as follows. F(1)F(0) ATP synthase produces ATP from ADP in the presence of a proton or sodium gradient. F-type ATPases consist of two structural domains, F(1) containing the extramembraneous catalytic core and F(0) containing the membrane proton channel, linked together by a central stalk and a peripheral stalk. During catalysis, ATP synthesis in the catalytic domain of F(1) is coupled via a rotary mechanism of the central stalk subunits to proton translocation. Functionally, component of the F(0) channel, it forms part of the peripheral stalk, linking F(1) to F(0). The protein is ATP synthase subunit b (atpF) of Micrococcus luteus (strain ATCC 4698 / DSM 20030 / JCM 1464 / CCM 169 / CCUG 5858 / IAM 1056 / NBRC 3333 / NCIMB 9278 / NCTC 2665 / VKM Ac-2230) (Micrococcus lysodeikticus).